The following is a 102-amino-acid chain: Small ribosomal subunit protein uS10 (102 aa).

This sequence belongs to the universal ribosomal protein uS10 family. Part of the 30S ribosomal subunit.

In terms of biological role, involved in the binding of tRNA to the ribosomes. This is Small ribosomal subunit protein uS10 from Leuconostoc citreum (strain KM20).